The primary structure comprises 1165 residues: TBC1 domain family member 1 (1165 aa).

Ser-146 carries the phosphoserine modification. Positions 207–234 are disordered; sequence FSSDQSRSALQPPGDGERGPRPMRKSFS. Ser-232 is subject to Phosphoserine; by PKB/AKT1. Position 234 is a phosphoserine; by AMPK (Ser-234). Residues 243 to 401 enclose the PID domain; the sequence is FRKEFQDAGL…LHKLCERIEG (159 aa). At Ser-500 the chain carries Phosphoserine. Residue Thr-502 is modified to Phosphothreonine; by PKB/AKT1. Residues Ser-504, Ser-522, Ser-524, Ser-562, Ser-563, Ser-567, Ser-568, and Ser-582 each carry the phosphoserine modification. Residue Thr-593 is modified to Phosphothreonine. Ser-611 carries the post-translational modification Phosphoserine. Ser-624 carries the phosphoserine; by PKB/AKT1 modification. A disordered region spans residues 624–651; that stretch reads SVSTETPHERKDFESKADHISDASRTPV. A compositionally biased stretch (basic and acidic residues) spans 629–645; sequence TPHERKDFESKADHISD. 2 positions are modified to phosphoserine: Ser-692 and Ser-938. In terms of domain architecture, Rab-GAP TBC spans 797 to 991; the sequence is GVPRHHRGEI…RVFDMIFLQG (195 aa). At Tyr-949 the chain carries Phosphotyrosine. Positions 1146–1165 are disordered; sequence QTAELGSQESDPTLPKPSGD.

In terms of assembly, interacts with APPL2 (via BAR domain); interaction is dependent of TBC1D1 phosphorylation at Ser-232; interaction diminishes the phosphorylation of TBC1D1 at Thr-593, resulting in inhibition of SLC2A4/GLUT4 translocation and glucose uptake. In terms of processing, insulin-stimulated phosphorylation by AKT family kinases stimulates SLC2A4/GLUT4 translocation.

The protein resides in the nucleus. In terms of biological role, may act as a GTPase-activating protein for Rab family protein(s). May play a role in the cell cycle and differentiation of various tissues. Involved in the trafficking and translocation of GLUT4-containing vesicles and insulin-stimulated glucose uptake into cells. In Bos taurus (Bovine), this protein is TBC1 domain family member 1 (TBC1D1).